Consider the following 303-residue polypeptide: UDP-N-acetylenolpyruvoylglucosamine reductase (303 aa).

Residues 30-195 enclose the FAD-binding PCMH-type domain; that stretch reads KTGGPADLLA…LSARFEMAKG (166 aa). Arg174 is a catalytic residue. Ser224 (proton donor) is an active-site residue. Glu294 is an active-site residue.

The protein belongs to the MurB family. The cofactor is FAD.

Its subcellular location is the cytoplasm. The catalysed reaction is UDP-N-acetyl-alpha-D-muramate + NADP(+) = UDP-N-acetyl-3-O-(1-carboxyvinyl)-alpha-D-glucosamine + NADPH + H(+). It functions in the pathway cell wall biogenesis; peptidoglycan biosynthesis. Its function is as follows. Cell wall formation. The protein is UDP-N-acetylenolpyruvoylglucosamine reductase of Latilactobacillus sakei subsp. sakei (strain 23K) (Lactobacillus sakei subsp. sakei).